Reading from the N-terminus, the 110-residue chain is Phosphoribosyl-ATP pyrophosphatase (110 aa).

The protein belongs to the PRA-PH family.

The protein localises to the cytoplasm. The enzyme catalyses 1-(5-phospho-beta-D-ribosyl)-ATP + H2O = 1-(5-phospho-beta-D-ribosyl)-5'-AMP + diphosphate + H(+). Its pathway is amino-acid biosynthesis; L-histidine biosynthesis; L-histidine from 5-phospho-alpha-D-ribose 1-diphosphate: step 2/9. The sequence is that of Phosphoribosyl-ATP pyrophosphatase from Pseudomonas syringae pv. tomato (strain ATCC BAA-871 / DC3000).